A 465-amino-acid chain; its full sequence is Chromosomal replication initiator protein DnaA (465 aa).

Residues 1-87 form a domain I, interacts with DnaA modulators region; that stretch reads MLWTDCLTRL…RPGSILSSSE (87 aa). The disordered stretch occupies residues 81-123; it reads SILSSSEQPATTTAALQTAPIPQPAKVKREPEPVANTAVSSKS. Low complexity predominate over residues 88–100; the sequence is QPATTTAALQTAP. The tract at residues 88–127 is domain II; the sequence is QPATTTAALQTAPIPQPAKVKREPEPVANTAVSSKSSKKK. The segment at 128–345 is domain III, AAA+ region; the sequence is LLNPQFTFSL…GALNKVVAIS (218 aa). Positions 173, 175, 176, and 177 each coordinate ATP. Residues 346–465 form a domain IV, binds dsDNA region; sequence RFKGAPIDLD…YKNLLRLLQS (120 aa).

The protein belongs to the DnaA family. Oligomerizes as a right-handed, spiral filament on DNA at oriC.

The protein resides in the cytoplasm. In terms of biological role, plays an essential role in the initiation and regulation of chromosomal replication. ATP-DnaA binds to the origin of replication (oriC) to initiate formation of the DNA replication initiation complex once per cell cycle. Binds the DnaA box (a 9 base pair repeat at the origin) and separates the double-stranded (ds)DNA. Forms a right-handed helical filament on oriC DNA; dsDNA binds to the exterior of the filament while single-stranded (ss)DNA is stabiized in the filament's interior. The ATP-DnaA-oriC complex binds and stabilizes one strand of the AT-rich DNA unwinding element (DUE), permitting loading of DNA polymerase. After initiation quickly degrades to an ADP-DnaA complex that is not apt for DNA replication. Binds acidic phospholipids. In Acinetobacter baumannii (strain ATCC 17978 / DSM 105126 / CIP 53.77 / LMG 1025 / NCDC KC755 / 5377), this protein is Chromosomal replication initiator protein DnaA.